Consider the following 512-residue polypeptide: Proline--tRNA ligase (512 aa).

Residues 460 to 470 show a composition bias toward acidic residues; that stretch reads SDEDDEQDTTD. The tract at residues 460 to 484 is disordered; it reads SDEDDEQDTTDENMGVNNDTTVESN.

It belongs to the class-II aminoacyl-tRNA synthetase family. ProS type 3 subfamily. Homodimer.

Its subcellular location is the cytoplasm. The enzyme catalyses tRNA(Pro) + L-proline + ATP = L-prolyl-tRNA(Pro) + AMP + diphosphate. In terms of biological role, catalyzes the attachment of proline to tRNA(Pro) in a two-step reaction: proline is first activated by ATP to form Pro-AMP and then transferred to the acceptor end of tRNA(Pro). This is Proline--tRNA ligase from Haloquadratum walsbyi (strain DSM 16790 / HBSQ001).